A 59-amino-acid chain; its full sequence is Cecropin-A1 (59 aa).

Positions 1–23 are cleaved as a signal peptide; it reads MNFTKLFAIVLLAALVLLGQTEA.

The protein belongs to the cecropin family.

It is found in the secreted. Functionally, cecropins have lytic and antibacterial activity against several Gram-positive and Gram-negative bacteria. The polypeptide is Cecropin-A1 (CECA1) (Aedes albopictus (Asian tiger mosquito)).